The following is a 123-amino-acid chain: MAKSLRSKWKRKMRAEKRKKNAPKELARLKTVLAKGSNVLMDDVKEIATVVPAKKINEKMDLDVDAPEGESSKMDTELKRNKKNLRDQHGQYPVWFNQRQQKKLKSQCGKKKGKSKQAKKLAW.

The segment covering 1 to 21 has biased composition (basic residues); that stretch reads MAKSLRSKWKRKMRAEKRKKN. Disordered regions lie at residues 1-22 and 61-123; these read MAKSLRSKWKRKMRAEKRKKNA and DLDV…KLAW. The span at 70-89 shows a compositional bias: basic and acidic residues; sequence ESSKMDTELKRNKKNLRDQH. A compositionally biased stretch (basic residues) spans 100 to 123; that stretch reads QQKKLKSQCGKKKGKSKQAKKLAW.

This sequence belongs to the learning-associated protein family.

The protein localises to the nucleus. Its subcellular location is the nucleolus. The protein resides in the chromosome. In terms of biological role, regulates dendritic and spine growth and synaptic transmission. The polypeptide is Protein LLP homolog (llph) (Xenopus laevis (African clawed frog)).